Reading from the N-terminus, the 235-residue chain is Probable ribonuclease P protein subunit 3 (235 aa).

The protein belongs to the eukaryotic/archaeal RNase P protein component 3 family.

The protein localises to the nucleus. It carries out the reaction Endonucleolytic cleavage of RNA, removing 5'-extranucleotides from tRNA precursor.. Part of ribonuclease P, a protein complex that generates mature tRNA molecules by cleaving their 5'-ends. The sequence is that of Probable ribonuclease P protein subunit 3 from Schizosaccharomyces pombe (strain 972 / ATCC 24843) (Fission yeast).